A 376-amino-acid polypeptide reads, in one-letter code: Multicilin (376 aa).

Residues 165 to 213 (EQYWRDVADHNQKALGDALVENNQLQVSLTEKQEEIASLKEKNIQLNEL) are a coiled coil. A disordered region spans residues 230–261 (ERPKHSSGATQGRLPVKRSLEDFYPQSNEPDS). Residues 331 to 376 (TELEEDVSFRTSIKEHSTIRTLAFPQGNAFTIRTAAGGYKFRWVPN) are TIRT domain.

Belongs to the geminin family. Component of the EDM complex, at least composed of e2f4, e2f5, mcidas and tfdp1.

The protein resides in the nucleus. Functionally, transcription regulator specifically required for multiciliate cell differentiation. Acts in a multiprotein complex containing e2f4 and e2f5 that binds and activate genes required for centriole biogenesis. Activates genes required for centriole assembly (plk4, cep152) and genes specifically required for motile cilia formation (foxj1). Also promotes the deuterosome pathway of centriole biogenesis by activating expression of deup1, but not its paralog cep63. This Xenopus tropicalis (Western clawed frog) protein is Multicilin (mcidas).